The sequence spans 142 residues: Large ribosomal subunit protein uL11 (142 aa).

This sequence belongs to the universal ribosomal protein uL11 family. As to quaternary structure, part of the ribosomal stalk of the 50S ribosomal subunit. Interacts with L10 and the large rRNA to form the base of the stalk. L10 forms an elongated spine to which L12 dimers bind in a sequential fashion forming a multimeric L10(L12)X complex. One or more lysine residues are methylated.

In terms of biological role, forms part of the ribosomal stalk which helps the ribosome interact with GTP-bound translation factors. The polypeptide is Large ribosomal subunit protein uL11 (Nitrobacter winogradskyi (strain ATCC 25391 / DSM 10237 / CIP 104748 / NCIMB 11846 / Nb-255)).